The chain runs to 63 residues: Conotoxin Cl14.11 (63 aa).

The signal sequence occupies residues 1-21 (MRFLLLLTVALLLTCIMETDA). Residues 22 to 34 (EAKPEDLAERFRE) constitute a propeptide that is removed on maturation.

Post-translationally, contains 2 disulfide bond. As to expression, expressed by the venom duct.

The protein resides in the secreted. The sequence is that of Conotoxin Cl14.11 from Californiconus californicus (California cone).